The primary structure comprises 362 residues: UDP-N-acetylglucosamine--N-acetylmuramyl-(pentapeptide) pyrophosphoryl-undecaprenol N-acetylglucosamine transferase (362 aa).

Residues 15–17 (TGG), Asn127, Arg165, Ser191, Ile247, 266–271 (ALTVSE), and Gln292 each bind UDP-N-acetyl-alpha-D-glucosamine.

It belongs to the glycosyltransferase 28 family. MurG subfamily.

Its subcellular location is the cell inner membrane. It carries out the reaction di-trans,octa-cis-undecaprenyl diphospho-N-acetyl-alpha-D-muramoyl-L-alanyl-D-glutamyl-meso-2,6-diaminopimeloyl-D-alanyl-D-alanine + UDP-N-acetyl-alpha-D-glucosamine = di-trans,octa-cis-undecaprenyl diphospho-[N-acetyl-alpha-D-glucosaminyl-(1-&gt;4)]-N-acetyl-alpha-D-muramoyl-L-alanyl-D-glutamyl-meso-2,6-diaminopimeloyl-D-alanyl-D-alanine + UDP + H(+). It functions in the pathway cell wall biogenesis; peptidoglycan biosynthesis. In terms of biological role, cell wall formation. Catalyzes the transfer of a GlcNAc subunit on undecaprenyl-pyrophosphoryl-MurNAc-pentapeptide (lipid intermediate I) to form undecaprenyl-pyrophosphoryl-MurNAc-(pentapeptide)GlcNAc (lipid intermediate II). This chain is UDP-N-acetylglucosamine--N-acetylmuramyl-(pentapeptide) pyrophosphoryl-undecaprenol N-acetylglucosamine transferase, found in Shewanella baltica (strain OS185).